The sequence spans 77 residues: uncharacterized protein (77 aa).

Residues 53 to 77 (KRVSSEANKEKSDITELLRKQVRPD) form a disordered region.

This is an uncharacterized protein from Escherichia coli (strain K12).